A 266-amino-acid chain; its full sequence is Ribosomal RNA small subunit methyltransferase A (266 aa).

Asn10, Ile12, Gly37, Glu58, Asp82, and Asn105 together coordinate S-adenosyl-L-methionine.

Belongs to the class I-like SAM-binding methyltransferase superfamily. rRNA adenine N(6)-methyltransferase family. RsmA subfamily.

The protein resides in the cytoplasm. It carries out the reaction adenosine(1518)/adenosine(1519) in 16S rRNA + 4 S-adenosyl-L-methionine = N(6)-dimethyladenosine(1518)/N(6)-dimethyladenosine(1519) in 16S rRNA + 4 S-adenosyl-L-homocysteine + 4 H(+). Specifically dimethylates two adjacent adenosines (A1518 and A1519) in the loop of a conserved hairpin near the 3'-end of 16S rRNA in the 30S particle. May play a critical role in biogenesis of 30S subunits. This chain is Ribosomal RNA small subunit methyltransferase A, found in Mycoplasma capricolum subsp. capricolum (strain California kid / ATCC 27343 / NCTC 10154).